Here is a 227-residue protein sequence, read N- to C-terminus: Deoxyribose-phosphate aldolase (227 aa).

The active-site Proton donor/acceptor is Asp96. Lys158 (schiff-base intermediate with acetaldehyde) is an active-site residue. The Proton donor/acceptor role is filled by Lys187.

Belongs to the DeoC/FbaB aldolase family. DeoC type 1 subfamily.

It is found in the cytoplasm. The enzyme catalyses 2-deoxy-D-ribose 5-phosphate = D-glyceraldehyde 3-phosphate + acetaldehyde. Its pathway is carbohydrate degradation; 2-deoxy-D-ribose 1-phosphate degradation; D-glyceraldehyde 3-phosphate and acetaldehyde from 2-deoxy-alpha-D-ribose 1-phosphate: step 2/2. Catalyzes a reversible aldol reaction between acetaldehyde and D-glyceraldehyde 3-phosphate to generate 2-deoxy-D-ribose 5-phosphate. This Desulfotalea psychrophila (strain LSv54 / DSM 12343) protein is Deoxyribose-phosphate aldolase.